The chain runs to 479 residues: Ribosomal RNA small subunit methyltransferase F (479 aa).

S-adenosyl-L-methionine is bound by residues 125-131 (AAAPGSK), E149, D176, and D194. C247 functions as the Nucleophile in the catalytic mechanism.

It belongs to the class I-like SAM-binding methyltransferase superfamily. RsmB/NOP family.

It is found in the cytoplasm. It catalyses the reaction cytidine(1407) in 16S rRNA + S-adenosyl-L-methionine = 5-methylcytidine(1407) in 16S rRNA + S-adenosyl-L-homocysteine + H(+). In terms of biological role, specifically methylates the cytosine at position 1407 (m5C1407) of 16S rRNA. This Escherichia coli O6:H1 (strain CFT073 / ATCC 700928 / UPEC) protein is Ribosomal RNA small subunit methyltransferase F.